Here is a 305-residue protein sequence, read N- to C-terminus: Oxygen-dependent coproporphyrinogen-III oxidase (305 aa).

Position 92 (Ser92) interacts with substrate. Positions 96 and 106 each coordinate a divalent metal cation. Catalysis depends on His106, which acts as the Proton donor. 108–110 (NVR) is a substrate binding site. A divalent metal cation is bound by residues His145 and His175. Residues 239 to 274 (YVEFNLLFDRGTLFGLQSGGRAESILISLPPLVRWE) form an important for dimerization region. Residue 257-259 (GGR) coordinates substrate.

Belongs to the aerobic coproporphyrinogen-III oxidase family. In terms of assembly, homodimer. Requires a divalent metal cation as cofactor.

The protein localises to the cytoplasm. The catalysed reaction is coproporphyrinogen III + O2 + 2 H(+) = protoporphyrinogen IX + 2 CO2 + 2 H2O. It participates in porphyrin-containing compound metabolism; protoporphyrin-IX biosynthesis; protoporphyrinogen-IX from coproporphyrinogen-III (O2 route): step 1/1. Functionally, involved in the heme biosynthesis. Catalyzes the aerobic oxidative decarboxylation of propionate groups of rings A and B of coproporphyrinogen-III to yield the vinyl groups in protoporphyrinogen-IX. In Xylella fastidiosa (strain 9a5c), this protein is Oxygen-dependent coproporphyrinogen-III oxidase.